We begin with the raw amino-acid sequence, 297 residues long: HTH-type transcriptional regulator ArgP (297 aa).

The region spanning 4 to 60 is the HTH lysR-type domain; it reads PDYRTLQALDAVIRERGFERAAQKLCITQSAVSQRIKQLENMFGQPLLVRTVPPRPT. The H-T-H motif DNA-binding region spans 21–40; the sequence is FERAAQKLCITQSAVSQRIK.

It belongs to the LysR transcriptional regulatory family. In terms of assembly, homodimer.

Functionally, controls the transcription of genes involved in arginine and lysine metabolism. The polypeptide is HTH-type transcriptional regulator ArgP (Escherichia coli O7:K1 (strain IAI39 / ExPEC)).